The following is a 214-amino-acid chain: Ras-related protein Rab-17 (214 aa).

Phosphoserine is present on S29. GTP contacts are provided by G31, K32, T33, and T50. Residues T33, T50, and D73 each contribute to the Mg(2+) site. The short motif at 43–54 (DFSNVLPTVGCA) is the Switch 1 element. The Switch 2 motif lies at 75-91 (AGQEKYQSVCHLYFRGA). 5 residues coordinate GTP: G76, N132, K133, D135, and A163. Residues 183–204 (RAGDTGSSRPQEGEAVALNQEP) are disordered. Residues C211 and C212 are each lipidated (S-geranylgeranyl cysteine).

It belongs to the small GTPase superfamily. Rab family. Mg(2+) serves as cofactor. In terms of tissue distribution, expressed in kidney, liver, and intestine mainly by epithelial cells. Expressed in hippocampus (at protein level).

It localises to the recycling endosome membrane. The protein resides in the melanosome. It is found in the cell projection. The protein localises to the dendrite. The enzyme catalyses GTP + H2O = GDP + phosphate + H(+). Its activity is regulated as follows. Regulated by guanine nucleotide exchange factors (GEFs) which promote the exchange of bound GDP for free GTP. Regulated by GTPase activating proteins (GAPs) which increase the GTP hydrolysis activity. Inhibited by GDP dissociation inhibitors (GDIs). In terms of biological role, the small GTPases Rab are key regulators of intracellular membrane trafficking, from the formation of transport vesicles to their fusion with membranes. Rabs cycle between an inactive GDP-bound form and an active GTP-bound form that is able to recruit to membranes different set of downstream effectors directly responsible for vesicle formation, movement, tethering and fusion. RAB17 is involved in transcytosis, the directed movement of endocytosed material through the cell and its exocytosis from the plasma membrane at the opposite side. Mainly observed in epithelial cells, transcytosis mediates, for instance, the transcellular transport of immunoglobulins from the basolateral surface to the apical surface. Most probably controls membrane trafficking through apical recycling endosomes in a post-endocytic step of transcytosis. Required for melanosome transport and release from melanocytes, it also regulates dendrite and dendritic spine development. May also play a role in cell migration. The chain is Ras-related protein Rab-17 from Mus musculus (Mouse).